The primary structure comprises 178 residues: Probetacellulin (178 aa).

The N-terminal stretch at 1-31 is a signal peptide; sequence MDRAARCSGASSLPLLLALALGLVILHCVVA. Residues 32–118 lie on the Extracellular side of the membrane; it reads DGNSTRSPET…LFYLRGDRGQ (87 aa). Residue Asn-34 is glycosylated (N-linked (GlcNAc...) asparagine). Positions 65–105 constitute an EGF-like domain; sequence HFSRCPKQYKHYCIKGRCRFVVAEQTPSCVCDEGYIGARCE. 3 cysteine pairs are disulfide-bonded: Cys-69–Cys-82, Cys-77–Cys-93, and Cys-95–Cys-104. Residues 112–178 constitute a propeptide, removed in mature form; sequence LRGDRGQILV…NEDIEETNIA (67 aa). A helical membrane pass occupies residues 119-139; the sequence is ILVICLIAVMVVFIILVIGVC. Residues 140–178 are Cytoplasmic-facing; it reads TCCHPLRKRRKRKKKEEEMETLGKDITPINEDIEETNIA.

In terms of assembly, monomer. Interacts with EGFR and ERBB4. In terms of tissue distribution, synthesized in several tissues and tumor cells. Predominantly expressed in pancreas and small intestine.

Its subcellular location is the secreted. The protein localises to the extracellular space. The protein resides in the cell membrane. Growth factor that binds to EGFR, ERBB4 and other EGF receptor family members. Potent mitogen for retinal pigment epithelial cells and vascular smooth muscle cells. In Homo sapiens (Human), this protein is Probetacellulin (BTC).